We begin with the raw amino-acid sequence, 719 residues long: Phosphoribosylformylglycinamidine synthase subunit PurL (719 aa).

Histidine 47 is an active-site residue. 2 residues coordinate ATP: tyrosine 50 and lysine 89. Glutamate 91 serves as a coordination point for Mg(2+). Substrate-binding positions include 92 to 95 and arginine 114; that span reads SHNH. Histidine 93 functions as the Proton acceptor in the catalytic mechanism. A Mg(2+)-binding site is contributed by aspartate 115. Glutamine 238 is a substrate binding site. Aspartate 266 contributes to the Mg(2+) binding site. 310-312 serves as a coordination point for substrate; the sequence is ESQ. ATP contacts are provided by aspartate 488 and glycine 525. Asparagine 526 is a Mg(2+) binding site. A substrate-binding site is contributed by serine 528.

This sequence belongs to the FGAMS family. Monomer. Part of the FGAM synthase complex composed of 1 PurL, 1 PurQ and 2 PurS subunits.

Its subcellular location is the cytoplasm. The catalysed reaction is N(2)-formyl-N(1)-(5-phospho-beta-D-ribosyl)glycinamide + L-glutamine + ATP + H2O = 2-formamido-N(1)-(5-O-phospho-beta-D-ribosyl)acetamidine + L-glutamate + ADP + phosphate + H(+). It participates in purine metabolism; IMP biosynthesis via de novo pathway; 5-amino-1-(5-phospho-D-ribosyl)imidazole from N(2)-formyl-N(1)-(5-phospho-D-ribosyl)glycinamide: step 1/2. Its function is as follows. Part of the phosphoribosylformylglycinamidine synthase complex involved in the purines biosynthetic pathway. Catalyzes the ATP-dependent conversion of formylglycinamide ribonucleotide (FGAR) and glutamine to yield formylglycinamidine ribonucleotide (FGAM) and glutamate. The FGAM synthase complex is composed of three subunits. PurQ produces an ammonia molecule by converting glutamine to glutamate. PurL transfers the ammonia molecule to FGAR to form FGAM in an ATP-dependent manner. PurS interacts with PurQ and PurL and is thought to assist in the transfer of the ammonia molecule from PurQ to PurL. This Roseobacter denitrificans (strain ATCC 33942 / OCh 114) (Erythrobacter sp. (strain OCh 114)) protein is Phosphoribosylformylglycinamidine synthase subunit PurL.